The following is a 775-amino-acid chain: Transposon TX1 uncharacterized 82 kDa protein (775 aa).

Residues 1-10 (MGGNKKESYK) are compositionally biased toward basic and acidic residues. Disordered stretches follow at residues 1 to 46 (MGGN…ASTS), 256 to 277 (PKGQ…KTSY), and 535 to 565 (PIQD…TSTV). Polar residues predominate over residues 35–46 (EPMSKSPIASTS). A compositionally biased stretch (basic and acidic residues) spans 539–549 (PADKTAGKDGE).

This is Transposon TX1 uncharacterized 82 kDa protein from Xenopus laevis (African clawed frog).